The chain runs to 120 residues: Large ribosomal subunit protein uL18 (120 aa).

The protein belongs to the universal ribosomal protein uL18 family. In terms of assembly, part of the 50S ribosomal subunit; part of the 5S rRNA/L5/L18/L25 subcomplex. Contacts the 5S and 23S rRNAs.

Functionally, this is one of the proteins that bind and probably mediate the attachment of the 5S RNA into the large ribosomal subunit, where it forms part of the central protuberance. The chain is Large ribosomal subunit protein uL18 from Nitrobacter hamburgensis (strain DSM 10229 / NCIMB 13809 / X14).